A 364-amino-acid chain; its full sequence is Anthranilate phosphoribosyltransferase 1 (364 aa).

Residues glycine 102, 105–106 (GD), threonine 110, 112–115 (NIST), 130–138 (KHGNRSASS), and serine 142 contribute to the 5-phospho-alpha-D-ribose 1-diphosphate site. An anthranilate-binding site is contributed by glycine 102. A Mg(2+)-binding site is contributed by serine 114. An anthranilate-binding site is contributed by asparagine 133. Arginine 188 is an anthranilate binding site. The Mg(2+) site is built by aspartate 247 and glutamate 248.

It belongs to the anthranilate phosphoribosyltransferase family. In terms of assembly, homodimer. Mg(2+) serves as cofactor.

The catalysed reaction is N-(5-phospho-beta-D-ribosyl)anthranilate + diphosphate = 5-phospho-alpha-D-ribose 1-diphosphate + anthranilate. Its pathway is amino-acid biosynthesis; L-tryptophan biosynthesis; L-tryptophan from chorismate: step 2/5. Functionally, catalyzes the transfer of the phosphoribosyl group of 5-phosphorylribose-1-pyrophosphate (PRPP) to anthranilate to yield N-(5'-phosphoribosyl)-anthranilate (PRA). The polypeptide is Anthranilate phosphoribosyltransferase 1 (Nostoc sp. (strain PCC 7120 / SAG 25.82 / UTEX 2576)).